The following is a 115-amino-acid chain: UPF0102 protein Swol_1475 (115 aa).

The protein belongs to the UPF0102 family.

This is UPF0102 protein Swol_1475 from Syntrophomonas wolfei subsp. wolfei (strain DSM 2245B / Goettingen).